The sequence spans 421 residues: Phosphoribosylamine--glycine ligase (421 aa).

In terms of domain architecture, ATP-grasp spans Lys-108 to Met-314. Residue Ile-134–Ser-195 coordinates ATP. Mg(2+) contacts are provided by Glu-284 and Asn-286.

The protein belongs to the GARS family. Mg(2+) serves as cofactor. It depends on Mn(2+) as a cofactor.

The catalysed reaction is 5-phospho-beta-D-ribosylamine + glycine + ATP = N(1)-(5-phospho-beta-D-ribosyl)glycinamide + ADP + phosphate + H(+). The protein operates within purine metabolism; IMP biosynthesis via de novo pathway; N(1)-(5-phospho-D-ribosyl)glycinamide from 5-phospho-alpha-D-ribose 1-diphosphate: step 2/2. The polypeptide is Phosphoribosylamine--glycine ligase (Streptococcus pyogenes serotype M3 (strain SSI-1)).